Here is a 467-residue protein sequence, read N- to C-terminus: Na(+)/H(+) exchange regulatory cofactor-like protein nrfl-1 (467 aa).

2 consecutive PDZ domains span residues 12–94 (RLCV…ISEE) and 143–225 (LAEL…ASED). The interval 344 to 429 (MSSHTEVLPP…ASSTSGYDDD (86 aa)) is disordered. The segment covering 407-425 (PSPLSNGSSHGYAASSTSG) has biased composition (polar residues).

As to quaternary structure, interacts (via PDZ 2 domain) with aat-6 (via PDZ-binding motif); the interaction sequesters aat-6 to the apical cell membrane of intestinal cells. Phosphorylated. As to expression, expressed in the excretory canal and intestine. Expressed on the apical cell membrane of intestinal cells (at protein level).

It localises to the cell projection. The protein localises to the microvillus membrane. It is found in the apical cell membrane. Scaffold protein that connects plasma membrane proteins with members of the ezrin/moesin/radixin family and thereby helps to link them to the actin cytoskeleton and to regulate their surface expression. Anchors the amino acid transporter protein aat-6 to the apical cell membrane of intestinal cells, particularly in older animals, in order to maintain amino acid homeostasis. May play a role in promoting fertility. This is Na(+)/H(+) exchange regulatory cofactor-like protein nrfl-1 from Caenorhabditis elegans.